The primary structure comprises 366 residues: Tyrosyl-DNA phosphodiesterase 2 (366 aa).

Position 1 is an N-acetylmethionine (Met-1). The segment covering 1-22 (MASGSSSDAAESAEPAAAPAAA) has biased composition (low complexity). The interval 1–30 (MASGSSSDAAESAEPAAAPAAAETEEDQVK) is disordered. Lys-30 is covalently cross-linked (Glycyl lysine isopeptide (Lys-Gly) (interchain with G-Cter in SUMO2)). Position 95 is a phosphothreonine; by ACVR1B (Thr-95). Residues 126-130 (NIDGL) are interaction with 5' end of substrate DNA. Residues Asp-128 and Glu-158 each coordinate Mg(2+). An interaction with 5' end of substrate DNA region spans residues 232-237 (HLESTR). Asp-268 acts as the Proton donor/acceptor in catalysis. The segment at 270–272 (NLR) is interaction with 5' end of substrate DNA.

It belongs to the CCR4/nocturin family. In terms of assembly, interacts with TRAF2, TRAF3, TRAF5, TRAF6, TNFRSF8/CD30, TNFRSF5/CD40, TNFRSF1B/TNF-R75, ETS1, ETS2, FLI1, SMAD3 and ACVR1B/ALK4. Mg(2+) is required as a cofactor. It depends on Mn(2+) as a cofactor. Ubiquitinated by TRAF6.

It localises to the nucleus. It is found in the PML body. Its subcellular location is the nucleolus. The protein localises to the cytoplasm. DNA repair enzyme that can remove a variety of covalent adducts from DNA through hydrolysis of a 5'-phosphodiester bond, giving rise to DNA with a free 5' phosphate. Catalyzes the hydrolysis of dead-end complexes between DNA and the topoisomerase 2 (TOP2) active site tyrosine residue. The 5'-tyrosyl DNA phosphodiesterase activity can enable the repair of TOP2-induced DNA double-strand breaks/DSBs without the need for nuclease activity, creating a 'clean' DSB with 5'-phosphate termini that are ready for ligation. Thereby, protects the transcription of many genes involved in neurological development and maintenance from the abortive activity of TOP2. Hydrolyzes 5'-phosphoglycolates on protruding 5' ends on DSBs due to DNA damage by radiation and free radicals. Has preference for single-stranded DNA or duplex DNA with a 4 base pair overhang as substrate. Also has 3'-tyrosyl DNA phosphodiesterase activity, but less efficiently and much slower than TDP1. Constitutes the major if not only 5'-tyrosyl-DNA phosphodiesterase in cells. Also acts as an adapter by participating in the specific activation of MAP3K7/TAK1 in response to TGF-beta: associates with components of the TGF-beta receptor-TRAF6-TAK1 signaling module and promotes their ubiquitination dependent complex formation. Involved in non-canonical TGF-beta induced signaling routes. May also act as a negative regulator of ETS1 and may inhibit NF-kappa-B activation. Acts as a regulator of ribosome biogenesis following stress. The protein is Tyrosyl-DNA phosphodiesterase 2 (Tdp2) of Rattus norvegicus (Rat).